The following is a 597-amino-acid chain: Aspartate--tRNA(Asp/Asn) ligase (597 aa).

Residue Glu175 participates in L-aspartate binding. An aspartate region spans residues 199–202 (QQYK). The L-aspartate site is built by Arg221 and His456. 221–223 (RDE) serves as a coordination point for ATP. Residue Glu490 coordinates ATP. Position 497 (Arg497) interacts with L-aspartate. An ATP-binding site is contributed by 542 to 545 (GVDR).

Belongs to the class-II aminoacyl-tRNA synthetase family. Type 1 subfamily. In terms of assembly, homodimer.

It is found in the cytoplasm. The enzyme catalyses tRNA(Asx) + L-aspartate + ATP = L-aspartyl-tRNA(Asx) + AMP + diphosphate. Its function is as follows. Aspartyl-tRNA synthetase with relaxed tRNA specificity since it is able to aspartylate not only its cognate tRNA(Asp) but also tRNA(Asn). Reaction proceeds in two steps: L-aspartate is first activated by ATP to form Asp-AMP and then transferred to the acceptor end of tRNA(Asp/Asn). The polypeptide is Aspartate--tRNA(Asp/Asn) ligase (Beijerinckia indica subsp. indica (strain ATCC 9039 / DSM 1715 / NCIMB 8712)).